We begin with the raw amino-acid sequence, 610 residues long: Myoneurin (610 aa).

In terms of domain architecture, BTB spans 24-89 (CDCTVVIGEF…IYTGTLNLDS (66 aa)). The tract at residues 156–199 (SEVSTDSVQANPKPRALTKKSSQSKKKKKAFSSQKPGQSKAVQY) is disordered. Positions 171-185 (ALTKKSSQSKKKKKA) are enriched in basic residues. Short sequence motifs (nuclear localization signal) lie at residues 174–190 (KKSS…SSQK) and 257–262 (KRKRRK). 8 C2H2-type zinc fingers span residues 302-324 (PMCN…MRIH), 330-352 (YVCH…VRTH), 358-381 (YKCE…RMHH), 387-409 (YKCD…ARKH), 415-437 (YVCD…VRRH), 443-465 (YVCD…SRKH), 471-493 (YICG…FRSH), and 499-522 (FICE…TKVH). Positions 519–548 (TKVHSGTDKNPDCSVDDHAVSEQDSVQRSP) are disordered. The segment covering 523-539 (SGTDKNPDCSVDDHAVS) has biased composition (basic and acidic residues).

It belongs to the krueppel C2H2-type zinc-finger protein family. In terms of tissue distribution, mainly expressed in the neuromuscular system. Located in and around synaptic myonuclei in adult muscle. Expression is dysregulated after nerve injury. Also found in the cerebellum, testis, heart, brain and liver.

It localises to the nucleus. This Mus musculus (Mouse) protein is Myoneurin (Mynn).